The following is a 223-amino-acid chain: von Willebrand factor C domain-containing protein 2-like (223 aa).

A signal peptide spans 1 to 21 (MGPFLPAICVVLLALNAAVSP). VWFC domains are found at residues 51–110 (KGCV…PECK) and 114–172 (NFCE…PICK).

It is found in the secreted. It localises to the synapse. May play a role in bone differentiation and matrix mineralization. May play a role in neural development. This is von Willebrand factor C domain-containing protein 2-like (vwc2l) from Danio rerio (Zebrafish).